The chain runs to 102 residues: Small ribosomal subunit protein uS10 (102 aa).

The interval 34–59 (QMSGPIPLPTKRLLVPTRKSPDGEGK) is disordered.

The protein belongs to the universal ribosomal protein uS10 family. As to quaternary structure, part of the 30S ribosomal subunit.

Functionally, involved in the binding of tRNA to the ribosomes. The protein is Small ribosomal subunit protein uS10 of Methanopyrus kandleri (strain AV19 / DSM 6324 / JCM 9639 / NBRC 100938).